The following is a 287-amino-acid chain: 4-diphosphocytidyl-2-C-methyl-D-erythritol kinase (287 aa).

Residue Lys12 is part of the active site. 97–107 provides a ligand contact to ATP; the sequence is PMGGGLGGGSS. The active site involves Asp139.

This sequence belongs to the GHMP kinase family. IspE subfamily.

It catalyses the reaction 4-CDP-2-C-methyl-D-erythritol + ATP = 4-CDP-2-C-methyl-D-erythritol 2-phosphate + ADP + H(+). Its pathway is isoprenoid biosynthesis; isopentenyl diphosphate biosynthesis via DXP pathway; isopentenyl diphosphate from 1-deoxy-D-xylulose 5-phosphate: step 3/6. In terms of biological role, catalyzes the phosphorylation of the position 2 hydroxy group of 4-diphosphocytidyl-2C-methyl-D-erythritol. The sequence is that of 4-diphosphocytidyl-2-C-methyl-D-erythritol kinase from Marinobacter nauticus (strain ATCC 700491 / DSM 11845 / VT8) (Marinobacter aquaeolei).